A 311-amino-acid chain; its full sequence is Uridine phosphorylase 1 (311 aa).

Phosphate is bound by residues G61, R95, and 139–142 (RIGT). Residues 143 to 144 (SG) and 218 to 220 (QGR) each bind uridine.

Belongs to the PNP/UDP phosphorylase family. As to quaternary structure, homodimer. In terms of processing, the N-terminus is blocked.

It carries out the reaction uridine + phosphate = alpha-D-ribose 1-phosphate + uracil. The enzyme catalyses 2'-deoxyuridine + phosphate = 2-deoxy-alpha-D-ribose 1-phosphate + uracil. Its pathway is pyrimidine metabolism; UMP biosynthesis via salvage pathway; uracil from uridine (phosphorylase route): step 1/1. Its activity is regulated as follows. Strongly inhibited by 2,2'-anhydro-5-ethyluridine, a competitive inhibitor. Catalyzes the reversible phosphorylytic cleavage of uridine to uracil and ribose-1-phosphate which can then be utilized as carbon and energy sources or in the rescue of pyrimidine bases for nucleotide synthesis. Shows broad substrate specificity and can also accept deoxyuridine and other analogous compounds. In Mus musculus (Mouse), this protein is Uridine phosphorylase 1.